We begin with the raw amino-acid sequence, 70 residues long: Large ribosomal subunit protein bL28c (70 aa).

Belongs to the bacterial ribosomal protein bL28 family.

It localises to the plastid. The protein resides in the cyanelle. This chain is Large ribosomal subunit protein bL28c (rpl28), found in Cyanophora paradoxa.